The following is a 555-amino-acid chain: Phosphomethylpyrimidine synthase (555 aa).

Substrate is bound by residues N191, M220, Y249, H285, S305–G307, D346–R349, and E385. H389 provides a ligand contact to Zn(2+). Y412 is a substrate binding site. H453 is a Zn(2+) binding site. Residues C533, C536, and C541 each coordinate [4Fe-4S] cluster.

The protein belongs to the ThiC family. Homodimer. Requires [4Fe-4S] cluster as cofactor.

It carries out the reaction 5-amino-1-(5-phospho-beta-D-ribosyl)imidazole + S-adenosyl-L-methionine = 4-amino-2-methyl-5-(phosphooxymethyl)pyrimidine + CO + 5'-deoxyadenosine + formate + L-methionine + 3 H(+). It participates in cofactor biosynthesis; thiamine diphosphate biosynthesis. Its function is as follows. Catalyzes the synthesis of the hydroxymethylpyrimidine phosphate (HMP-P) moiety of thiamine from aminoimidazole ribotide (AIR) in a radical S-adenosyl-L-methionine (SAM)-dependent reaction. This Ehrlichia ruminantium (strain Gardel) protein is Phosphomethylpyrimidine synthase.